The primary structure comprises 219 residues: Segregation and condensation protein B (219 aa).

The interval 193–219 (SLFAGGEEPSAEAADGGAGESTHGEEE) is disordered. The segment covering 196–207 (AGGEEPSAEAAD) has biased composition (low complexity).

It belongs to the ScpB family. Homodimer. Homodimerization may be required to stabilize the binding of ScpA to the Smc head domains. Component of a cohesin-like complex composed of ScpA, ScpB and the Smc homodimer, in which ScpA and ScpB bind to the head domain of Smc. The presence of the three proteins is required for the association of the complex with DNA.

The protein localises to the cytoplasm. In terms of biological role, participates in chromosomal partition during cell division. May act via the formation of a condensin-like complex containing Smc and ScpA that pull DNA away from mid-cell into both cell halves. In Symbiobacterium thermophilum (strain DSM 24528 / JCM 14929 / IAM 14863 / T), this protein is Segregation and condensation protein B.